Here is a 229-residue protein sequence, read N- to C-terminus: Flagellar L-ring protein (229 aa).

The signal sequence occupies residues methionine 1–glycine 25. Residue cysteine 26 is the site of N-palmitoyl cysteine attachment. Cysteine 26 carries S-diacylglycerol cysteine lipidation.

The protein belongs to the FlgH family. The basal body constitutes a major portion of the flagellar organelle and consists of four rings (L,P,S, and M) mounted on a central rod.

The protein localises to the cell outer membrane. Its subcellular location is the bacterial flagellum basal body. In terms of biological role, assembles around the rod to form the L-ring and probably protects the motor/basal body from shearing forces during rotation. This chain is Flagellar L-ring protein, found in Burkholderia cenocepacia (strain ATCC BAA-245 / DSM 16553 / LMG 16656 / NCTC 13227 / J2315 / CF5610) (Burkholderia cepacia (strain J2315)).